The chain runs to 258 residues: ATP synthase subunit a (258 aa).

Helical transmembrane passes span 30-50 (SSYFMVLTTVLTIVLFMVAMS), 85-105 (FFPFVFTLFIFILVANMLGMF), 122-142 (LIVTVALAMLVWLTVIIYGVF), 151-171 (LFVPSGVPIFVLPLVVVIEII), 198-218 (FAGFVVTLAAAWGGFGYLAGI), and 230-250 (LEFLVAFLQAYVFAMLTCIYL).

It belongs to the ATPase A chain family. In terms of assembly, F-type ATPases have 2 components, CF(1) - the catalytic core - and CF(0) - the membrane proton channel. CF(1) has five subunits: alpha(3), beta(3), gamma(1), delta(1), epsilon(1). CF(0) has three main subunits: a(1), b(2) and c(9-12). The alpha and beta chains form an alternating ring which encloses part of the gamma chain. CF(1) is attached to CF(0) by a central stalk formed by the gamma and epsilon chains, while a peripheral stalk is formed by the delta and b chains.

The protein resides in the cell inner membrane. In terms of biological role, key component of the proton channel; it plays a direct role in the translocation of protons across the membrane. This Maricaulis maris (strain MCS10) (Caulobacter maris) protein is ATP synthase subunit a.